We begin with the raw amino-acid sequence, 495 residues long: Glutamyl-tRNA(Gln) amidotransferase subunit A (495 aa).

Catalysis depends on charge relay system residues K78 and S158. S182 (acyl-ester intermediate) is an active-site residue.

Belongs to the amidase family. GatA subfamily. Heterotrimer of A, B and C subunits.

It carries out the reaction L-glutamyl-tRNA(Gln) + L-glutamine + ATP + H2O = L-glutaminyl-tRNA(Gln) + L-glutamate + ADP + phosphate + H(+). In terms of biological role, allows the formation of correctly charged Gln-tRNA(Gln) through the transamidation of misacylated Glu-tRNA(Gln) in organisms which lack glutaminyl-tRNA synthetase. The reaction takes place in the presence of glutamine and ATP through an activated gamma-phospho-Glu-tRNA(Gln). This Ruegeria sp. (strain TM1040) (Silicibacter sp.) protein is Glutamyl-tRNA(Gln) amidotransferase subunit A.